The following is an 898-amino-acid chain: Translation initiation factor IF-2 (898 aa).

Disordered stretches follow at residues 51-70 (RKSH…LKRK) and 114-303 (LAAE…KQHG). 2 stretches are compositionally biased toward basic and acidic residues: residues 114–171 (LAAE…EKSK) and 184–258 (PAKE…DDKG). Positions 398 to 567 (HRAPVVTIMG…LLQSELLELQ (170 aa)) constitute a tr-type G domain. The segment at 407–414 (GHVDHGKT) is G1. Residue 407–414 (GHVDHGKT) participates in GTP binding. The interval 432 to 436 (GITQH) is G2. A G3 region spans residues 453-456 (DTPG). GTP-binding positions include 453–457 (DTPGH) and 507–510 (NKID). The tract at residues 507–510 (NKID) is G4. The interval 543-545 (SAH) is G5.

Belongs to the TRAFAC class translation factor GTPase superfamily. Classic translation factor GTPase family. IF-2 subfamily.

The protein localises to the cytoplasm. Functionally, one of the essential components for the initiation of protein synthesis. Protects formylmethionyl-tRNA from spontaneous hydrolysis and promotes its binding to the 30S ribosomal subunits. Also involved in the hydrolysis of GTP during the formation of the 70S ribosomal complex. This Alcanivorax borkumensis (strain ATCC 700651 / DSM 11573 / NCIMB 13689 / SK2) protein is Translation initiation factor IF-2.